Reading from the N-terminus, the 242-residue chain is Interleukin-34 (242 aa).

An N-terminal signal peptide occupies residues 1–20 (MPRGFTWLRYLGIFLGVALG). The N-linked (GlcNAc...) asparagine glycan is linked to asparagine 76. The tract at residues 210-242 (TQLYPPPPWSPSSPPHSTGSVRPVRAQGEGLLP) is disordered. Pro residues predominate over residues 213-223 (YPPPPWSPSSP).

Belongs to the IL-34 family. As to quaternary structure, homodimer. Interacts with CSF1R. Detected in the sinusoidal epithelium in the red pulp of spleen (at protein level). Predominantly expressed in spleen. Also detected in a range of other tissues including heart, brain, lung, liver, kidney, thymus, testis, ovary, small intestine, prostate and colon.

The protein localises to the secreted. Cytokine that promotes the proliferation, survival and differentiation of monocytes and macrophages. Promotes the release of pro-inflammatory chemokines, and thereby plays an important role in innate immunity and in inflammatory processes. Plays an important role in the regulation of osteoclast proliferation and differentiation, and in the regulation of bone resorption. Signaling via CSF1R and its downstream effectors stimulates phosphorylation of MAPK1/ERK2 AND MAPK3/ERK1. The chain is Interleukin-34 (IL34) from Homo sapiens (Human).